A 50-amino-acid polypeptide reads, in one-letter code: Nosiheptide precursor (50 aa).

Positions 38–39 form a cross-link, thiazole-4-carboxylic acid (Ser-Cys); the sequence is SC. A cross-link (3-hydroxypyridine-2,5-dicarboxylic acid (Ser-Cys) (with S-47)) is located at residues 38–46; that stretch reads SCTTCECCC. The segment at residues 38-47 is a cross-link (3-hydroxypyridine-2,5-dicarboxylic acid (Ser-Ser) (with C-46)); sequence SCTTCECCCS. Positions 41-42 form a cross-link, thiazole-4-carboxylic acid (Thr-Cys); sequence TC. Glu-43 carries the post-translational modification 4-hydroxyglutamate. A cross-link (thiazole-4-carboxylic acid (Glu-Cys)) is located at residues 43–44; sequence EC. A cross-link (2-(cystein-S-ylcarbonyl)-3-methyl-4-(glutam-5-yloxy)methylindole (Glu-Cys)) is located at residues 43–45; sequence ECC. The thiazole-4-carboxylic acid (Cys-Cys) cross-link spans 45–46; it reads CC. The segment at residues 47-48 is a cross-link (thiazole-4-carboxylic acid (Ser-Cys)); the sequence is SC. At Ser-49 the chain carries 2,3-didehydroalanine (Ser). Ser-49 bears the Serine amide; atypical mark.

Belongs to the thiocillin family. In terms of processing, the amidation of Ser-49 is produced by the oxidative cleavage of Ser-50 rather than of a glycine, as in eukaryotes.

In terms of biological role, inhibits bacterial protein biosynthesis by binding to ribosomes. Specifically, binds to the complex of 23S rRNA and ribosomal protein L11 (RPLK) in the 50S ribosomal subunit. While allowing a weak binding of elongation factor G (EF-G) to the ribosome and subsequent GTP-hydrolysis, probably impairs conformational changes in both the ribosome and EF-G which are necessary for translocation. In vitro, inhibits Gram-positive bacteria S.aureus strain 209P (MIC=0.0009 ug/ml), S.aureus strain 133 (MIC=0.0019 ug/ml), S.aureus strain B3 (MIC=0.003 ug/ml), S.aureus strain Hb (MIC=0.003 ug/ml), M.citreus strain ATCC 8411 (MIC=0.0038 ug/ml), M.lysodeikticus strain ATCC 4698 (MIC=0.003 ug/ml), S.lutea strain ATCC 9341 (MIC=0.0011 ug/ml), S.faecalis strain ATCC 9790 (MIC=0.0007 ug/ml), S.viridans (MIC=0.0065 ug/ml), S.pyogenes hemolyticus strain Dig7 (MIC=0.00028 ug/ml), D.pneumoniae strain Til (MIC=0.00015 ug/ml), N.catrrhalis (MIC=0.0017 ug/ml), L.casei strain ATCC 6633 (MIC=0.003 ug/ml), B.cereus strain ATCC 6630 (MIC=0.0071 ug/ml) and various isolates of L.monocytogenes. In vitro, inhibits Gram-negative bacterium P.multocida strain A125 (MIC=0.0024 ug/ml) but not M.smegmatis strain ATCC 6630, S.typhimurium, A.aerogenes strain ATCC 8308, P.vulgaris, K.pneumoniae strain ATCC 10031, S.marcescens strain A476, P.aeruginosa strain Bass or B.bronchiseptica strain CN387. Does not inhibit Gram-negative bacterium E.coli strain ATCC 9637 but does inhibit purified ribosomes from E.coli. In vivo, has no systemic effect in mice infected with staphylococci or streptococci when applied orally or subcutaneously. Has a local effect in mice infected subcutaneously or intraperitoneally with staphylococci when applied immediately afterwards. Is not toxic to mice. The chain is Nosiheptide precursor from Streptomyces actuosus.